The primary structure comprises 240 residues: Vacuolar-sorting protein SNF7 (240 aa).

Position 72 is a phosphothreonine (Thr72). Phosphoserine occurs at positions 119 and 193. A disordered region spans residues 193–240; sequence SENKVSLPSVPSNKIKQSENSVKDGEEEEDEEDEDEKALRELQAEMGL. A compositionally biased stretch (polar residues) spans 195–212; sequence NKVSLPSVPSNKIKQSEN. Over residues 217-228 the composition is skewed to acidic residues; sequence GEEEEDEEDEDE. Lys229 participates in a covalent cross-link: Glycyl lysine isopeptide (Lys-Gly) (interchain with G-Cter in ubiquitin). Basic and acidic residues predominate over residues 229–240; it reads KALRELQAEMGL.

The protein belongs to the SNF7 family. Core component of the ESCRT-III complex (endosomal sorting required for transport complex III). ESCRT-III appears to be sequentially assembled as a flat lattice on the endosome membrane and forms a transient 450 kDa complex that contains DID4, oligomerized SNF7, VPS20 and VPS24. SNF7 polymerizes into spirals at the surface of lipid bilayers. SNF7 polymerization is nucleated by association of SNF7 with VPS20; the process is terminated through association of VPS24, possibly by capping the SNF7 filament. Interacts with VTA1; the interaction requires DID2. Interacts with BRO1. Interacts with DOA4. Interacts with HEH1 and HEH2. Interacts with RIM20 and YGR122W.

Its subcellular location is the cytoplasm. The protein localises to the endosome membrane. It localises to the nucleus envelope. Functionally, acts a component of the ESCRT-III complex required for the sorting and concentration of proteins resulting in the entry of these proteins into the invaginating vesicles of the multivesicular body (MVB). The sequential action of ESCRT-0, -I, and -II together with the ordered assembly of ESCRT-III links membrane invagination to cargo sorting. Membrane scission in the neck of the growing vesicle releases mature, cargo-laden ILVs into the lumen. ESCRT-III is critical for late steps in MVB sorting, such as membrane invagination and final cargo sorting and recruitment of late-acting components of the sorting machinery. SNF7 is the most abundant ESCRT-III subunit which forms membrane-sculpting filaments with 30 Angstrom periodicity and a exposed cationic membrane-binding surface. Its activation requires a prominent conformational rearrangement to expose protein-membrane and protein-protein interfaces. SNF7 filaments then form spirals that could function as spiral springs. The elastic expansion of compressed SNF7 spirals generates an area difference between the two sides of the membrane and thus curvature which could be the origin of membrane deformation leading eventually to fission. SNF7 recruits BRO1, which in turn recruits DOA4, which deubiquitinates cargos before their enclosure within MVB vesicles. ESCRT-III is also recruited to the nuclear envelope (NE) by integral INM proteins to surveil and clear defective nuclear pore complex (NPC) assembly intermediates to ensure the fidelity of NPC assembly. This is Vacuolar-sorting protein SNF7 from Saccharomyces cerevisiae (strain ATCC 204508 / S288c) (Baker's yeast).